The following is a 1115-amino-acid chain: Eukaryotic translation initiation factor 2-alpha kinase 3 (1115 aa).

A signal peptide spans 1–29 (MERATGPGSLARTLLLPLLLGLVAGTVTA). Over 30-514 (RRTSDLLAPT…PNYKNIRKKD (485 aa)) the chain is Extracellular. The interval 74–101 (SEALPAAAGEQEAREPEPEPEEEPDIRP) is disordered. A glycan (N-linked (GlcNAc...) asparagine) is linked at Asn259. The chain crosses the membrane as a helical span at residues 515 to 535 (PVLLLHWWKEIVGTIVFCIVA). Residues 536–1115 (TTFIVRRLFH…SSPHSPLPSN (580 aa)) lie on the Cytoplasmic side of the membrane. The 484-residue stretch at 593–1076 (FEPIQCMGRG…AASIIENAIF (484 aa)) folds into the Protein kinase domain. Position 599 to 607 (599 to 607 (MGRGGFGVV)) interacts with ATP. Phosphotyrosine; by autocatalysis is present on Tyr619. Lys622 lines the ATP pocket. The insert loop stretch occupies residues 647-887 (EHPGIVRYFN…SPKVYLYIQM (241 aa)). Position 715 is a phosphoserine (Ser715). The residue at position 802 (Thr802) is a Phosphothreonine. 2 disordered regions span residues 807–832 (VFED…VGNH) and 841–860 (RHSG…SRPT). The span at 845-860 (SKSSEPTVSVSPSRPT) shows a compositional bias: polar residues. The Proton acceptor role is filled by Asp936. At Thr981 the chain carries Phosphothreonine. The tract at residues 1087–1115 (LRQRSRSMSSPGAKHSRHSSSPHSPLPSN) is disordered. Ser1093 is subject to Phosphoserine.

It belongs to the protein kinase superfamily. Ser/Thr protein kinase family. GCN2 subfamily. In terms of assembly, forms dimers with HSPA5/BIP in resting cells. Homotetramerizes in response to endoplasmic reticulum (ER) stress, leading to its activation. Interacts with HSP90B1/GRP94. Interacts with DNAJC3; inhibiting EIF2AK3/PERK activity. Interacts with ATAD3A; ATAD3A and EIF2S1/eIF-2-alpha occupy a common binding site within the cytoplasmic loop of EIF2AK3/PERK, leading to prevent EIF2AK3/PERK association with its substrate EIF2S1/eIF-2-alpha. Interacts with MFN2. Interacts with TMEM33. Interacts with PDIA6. Interacts with LACC1. Oligomerization of the N-terminal ER luminal domain by ER stress promotes EIF2AK3/PERK trans-autophosphorylation of the C-terminal cytoplasmic kinase domain at multiple residues including Thr-981 on the kinase activation loop. Autophosphorylated at Tyr-619 following endoplasmic reticulum stress, leading to activate its activity. Dephosphorylated at Tyr-619 by PTPN1/PTP1B, leading to inactivate its enzyme activity. Phosphorylation at Thr-802 by AKT (AKT1, AKT2 and/or AKT3) inactivates EIF2AK3/PERK. In terms of processing, ADP-ribosylated by PARP16 upon ER stress, which increases kinase activity.

Its subcellular location is the endoplasmic reticulum membrane. The enzyme catalyses L-seryl-[protein] + ATP = O-phospho-L-seryl-[protein] + ADP + H(+). It carries out the reaction L-threonyl-[protein] + ATP = O-phospho-L-threonyl-[protein] + ADP + H(+). It catalyses the reaction L-tyrosyl-[protein] + ATP = O-phospho-L-tyrosyl-[protein] + ADP + H(+). With respect to regulation, inhibited by HSPA5/BIP in absence of stress. Perturbation in protein folding in the endoplasmic reticulum (ER) promotes reversible dissociation from HSPA5/BIP and oligomerization, resulting in trans-autophosphorylation and kinase activity induction. Inactivated following phosphorylation at Thr-802 by AKT (AKT1, AKT2 and/or AKT3). Inhibited by ATAD3A at mitochondria-endoplasmic reticulum contact sites, providing a safe haven for mitochondrial protein translation during ER stress. Metabolic-stress sensing protein kinase that phosphorylates the alpha subunit of eukaryotic translation initiation factor 2 (EIF2S1/eIF-2-alpha) in response to various stress, such as unfolded protein response (UPR). Key effector of the integrated stress response (ISR) to unfolded proteins: EIF2AK3/PERK specifically recognizes and binds misfolded proteins, leading to its activation and EIF2S1/eIF-2-alpha phosphorylation. EIF2S1/eIF-2-alpha phosphorylation in response to stress converts EIF2S1/eIF-2-alpha in a global protein synthesis inhibitor, leading to a global attenuation of cap-dependent translation, while concomitantly initiating the preferential translation of ISR-specific mRNAs, such as the transcriptional activators ATF4 and QRICH1, and hence allowing ATF4- and QRICH1-mediated reprogramming. The EIF2AK3/PERK-mediated unfolded protein response increases mitochondrial oxidative phosphorylation by promoting ATF4-mediated expression of COX7A2L/SCAF1, thereby increasing formation of respiratory chain supercomplexes. In contrast to most subcellular compartments, mitochondria are protected from the EIF2AK3/PERK-mediated unfolded protein response due to EIF2AK3/PERK inhibition by ATAD3A at mitochondria-endoplasmic reticulum contact sites. In addition to EIF2S1/eIF-2-alpha, also phosphorylates NFE2L2/NRF2 in response to stress, promoting release of NFE2L2/NRF2 from the BCR(KEAP1) complex, leading to nuclear accumulation and activation of NFE2L2/NRF2. Serves as a critical effector of unfolded protein response (UPR)-induced G1 growth arrest due to the loss of cyclin-D1 (CCND1). Involved in control of mitochondrial morphology and function. This chain is Eukaryotic translation initiation factor 2-alpha kinase 3, found in Bos taurus (Bovine).